The primary structure comprises 352 residues: Holliday junction branch migration complex subunit RuvB (352 aa).

A large ATPase domain (RuvB-L) region spans residues 5–191; sequence TDDFSEQRII…FGIVARLEFY (187 aa). ATP is bound by residues Leu30, Arg31, Gly72, Lys75, Thr76, Thr77, 138–140, Arg181, Tyr191, and Arg228; that span reads EDY. Mg(2+) is bound at residue Thr76. Residues 192–262 are small ATPAse domain (RuvB-S); the sequence is TPLELTKIVT…MADAALVMLD (71 aa). Positions 265–352 are head domain (RuvB-H); that stretch reads PVGFDLMDRK…GPNGDLWAGQ (88 aa). DNA contacts are provided by Arg301, Arg320, and Arg325.

The protein belongs to the RuvB family. Homohexamer. Forms an RuvA(8)-RuvB(12)-Holliday junction (HJ) complex. HJ DNA is sandwiched between 2 RuvA tetramers; dsDNA enters through RuvA and exits via RuvB. An RuvB hexamer assembles on each DNA strand where it exits the tetramer. Each RuvB hexamer is contacted by two RuvA subunits (via domain III) on 2 adjacent RuvB subunits; this complex drives branch migration. In the full resolvosome a probable DNA-RuvA(4)-RuvB(12)-RuvC(2) complex forms which resolves the HJ.

Its subcellular location is the cytoplasm. It carries out the reaction ATP + H2O = ADP + phosphate + H(+). In terms of biological role, the RuvA-RuvB-RuvC complex processes Holliday junction (HJ) DNA during genetic recombination and DNA repair, while the RuvA-RuvB complex plays an important role in the rescue of blocked DNA replication forks via replication fork reversal (RFR). RuvA specifically binds to HJ cruciform DNA, conferring on it an open structure. The RuvB hexamer acts as an ATP-dependent pump, pulling dsDNA into and through the RuvAB complex. RuvB forms 2 homohexamers on either side of HJ DNA bound by 1 or 2 RuvA tetramers; 4 subunits per hexamer contact DNA at a time. Coordinated motions by a converter formed by DNA-disengaged RuvB subunits stimulates ATP hydrolysis and nucleotide exchange. Immobilization of the converter enables RuvB to convert the ATP-contained energy into a lever motion, pulling 2 nucleotides of DNA out of the RuvA tetramer per ATP hydrolyzed, thus driving DNA branch migration. The RuvB motors rotate together with the DNA substrate, which together with the progressing nucleotide cycle form the mechanistic basis for DNA recombination by continuous HJ branch migration. Branch migration allows RuvC to scan DNA until it finds its consensus sequence, where it cleaves and resolves cruciform DNA. This chain is Holliday junction branch migration complex subunit RuvB, found in Janthinobacterium sp. (strain Marseille) (Minibacterium massiliensis).